We begin with the raw amino-acid sequence, 368 residues long: tRNA-specific 2-thiouridylase MnmA (368 aa).

Residues 11 to 18 (GMSGGVDS) and Met-37 contribute to the ATP site. The interaction with target base in tRNA stretch occupies residues 97–99 (NPD). Cys-102 functions as the Nucleophile in the catalytic mechanism. A disulfide bond links Cys-102 and Cys-199. Residue Gly-127 coordinates ATP. The interaction with tRNA stretch occupies residues 149–151 (KDQ). Cys-199 functions as the Cysteine persulfide intermediate in the catalytic mechanism. Residues 311-312 (RY) form an interaction with tRNA region.

It belongs to the MnmA/TRMU family. As to quaternary structure, interacts with TusE.

The protein localises to the cytoplasm. It carries out the reaction S-sulfanyl-L-cysteinyl-[protein] + uridine(34) in tRNA + AH2 + ATP = 2-thiouridine(34) in tRNA + L-cysteinyl-[protein] + A + AMP + diphosphate + H(+). Catalyzes the 2-thiolation of uridine at the wobble position (U34) of tRNA(Lys), tRNA(Glu) and tRNA(Gln), leading to the formation of s(2)U34, the first step of tRNA-mnm(5)s(2)U34 synthesis. Sulfur is provided by IscS, via a sulfur-relay system. Binds ATP and its substrate tRNAs. This Shigella boydii serotype 18 (strain CDC 3083-94 / BS512) protein is tRNA-specific 2-thiouridylase MnmA.